We begin with the raw amino-acid sequence, 150 residues long: uncharacterized protein (150 aa).

Repeat copies occupy residues 101–105, 106–110, 111–115, 116–120, and 121–125. The interval 101–125 is 5 X 5 AA tandem repeats of [FH]-H-[EK]-[IV]-N; it reads FHEVNHHEVNHHKINHHEVNHHKIN.

The protein belongs to the asfivirus D129L family.

This is an uncharacterized protein from African swine fever virus (isolate Tick/Malawi/Lil 20-1/1983) (ASFV).